We begin with the raw amino-acid sequence, 305 residues long: Phospho-N-acetylmuramoyl-pentapeptide-transferase (305 aa).

9 helical membrane-spanning segments follow: residues 1-21 (MLMV…RASK), 46-66 (AGGV…YLSG), 73-93 (ELLI…DDWL), 113-133 (FPLQ…LASH), 139-159 (LGPV…VNAF), 174-194 (IIVL…VAVL), 207-227 (VFMG…AYIL), 233-253 (LLPI…IQVI), and 282-302 (VTIR…WLLG).

Belongs to the glycosyltransferase 4 family. MraY subfamily. It depends on Mg(2+) as a cofactor.

It localises to the cell membrane. It carries out the reaction UDP-N-acetyl-alpha-D-muramoyl-L-alanyl-gamma-D-glutamyl-meso-2,6-diaminopimeloyl-D-alanyl-D-alanine + di-trans,octa-cis-undecaprenyl phosphate = di-trans,octa-cis-undecaprenyl diphospho-N-acetyl-alpha-D-muramoyl-L-alanyl-D-glutamyl-meso-2,6-diaminopimeloyl-D-alanyl-D-alanine + UMP. It participates in cell wall biogenesis; peptidoglycan biosynthesis. In terms of biological role, catalyzes the initial step of the lipid cycle reactions in the biosynthesis of the cell wall peptidoglycan: transfers peptidoglycan precursor phospho-MurNAc-pentapeptide from UDP-MurNAc-pentapeptide onto the lipid carrier undecaprenyl phosphate, yielding undecaprenyl-pyrophosphoryl-MurNAc-pentapeptide, known as lipid I. The chain is Phospho-N-acetylmuramoyl-pentapeptide-transferase from Deinococcus deserti (strain DSM 17065 / CIP 109153 / LMG 22923 / VCD115).